The primary structure comprises 139 residues: U6 snRNA-associated Sm-like protein LSm4 (139 aa).

M1 is subject to N-acetylmethionine. Residues 2-75 (LPLSLLKTAQ…IKYLRIPDEI (74 aa)) form the Sm domain. K80 is covalently cross-linked (Glycyl lysine isopeptide (Lys-Gly) (interchain with G-Cter in SUMO2)). Residues 87–139 (GRGRGGLQQQKQQKGRGMGGAGRGVFGGRGRGGIPGTGRGQPEKKPGRQAGKQ) form a disordered region. Gly residues predominate over residues 102-125 (RGMGGAGRGVFGGRGRGGIPGTGR).

It belongs to the snRNP Sm proteins family. In terms of assembly, component of the precatalytic spliceosome (spliceosome B complex). Component of the U4/U6-U5 tri-snRNP complex, a building block of the precatalytic spliceosome (spliceosome B complex). The U4/U6-U5 tri-snRNP complex is composed of the U4, U6 and U5 snRNAs and at least PRPF3, PRPF4, PRPF6, PRPF8, PRPF31, SNRNP200, TXNL4A, SNRNP40, SNRPB, SNRPD1, SNRPD2, SNRPD3, SNRPE, SNRPF, SNRPG, DDX23, CD2BP2, PPIH, SNU13, EFTUD2, SART1 and USP39, plus LSM2, LSM3, LSM4, LSM5, LSM6, LSM7 and LSM8. LSM2, LSM3, LSM4, LSM5, LSM6, LSM7 and LSM8 form a heptameric, ring-shaped subcomplex (the LSM2-8 complex) that is part of the U4/U6-U5 tri-snRNP complex and the precatalytic spliceosome.

The protein resides in the nucleus. Its function is as follows. Plays a role in pre-mRNA splicing as component of the U4/U6-U5 tri-snRNP complex that is involved in spliceosome assembly, and as component of the precatalytic spliceosome (spliceosome B complex). The heptameric LSM2-8 complex binds specifically to the 3'-terminal U-tract of U6 snRNA. The chain is U6 snRNA-associated Sm-like protein LSm4 (LSM4) from Bos taurus (Bovine).